Reading from the N-terminus, the 74-residue chain is U-actitoxin-Bgr3a (74 aa).

An N-terminal signal peptide occupies residues methionine 1–alanine 21. The propeptide occupies alanine 22–threonine 29. 3 disulfides stabilise this stretch: cysteine 35-cysteine 68, cysteine 37-cysteine 61, and cysteine 51-cysteine 69.

The protein belongs to the sea anemone type 3 (BDS) potassium channel toxin family.

The protein resides in the secreted. Its subcellular location is the nematocyst. In terms of biological role, potently and selectively inhibits voltage-gated potassium channels Kv11/KCNH/ERG. Acts as a gating-modifier toxin that shifts the voltage-dependence of ERG activation in the positive direction and suppresses its current amplitudes elicited by strong depolarizing pulses that maximally activate the channels. This Bunodosoma granuliferum (Red warty sea anemone) protein is U-actitoxin-Bgr3a.